The primary structure comprises 550 residues: Chaperonin GroEL (550 aa).

Residues 30–33 (TLGP), Lys-51, 87–91 (DGTTT), Gly-415, and Asp-495 contribute to the ATP site.

This sequence belongs to the chaperonin (HSP60) family. As to quaternary structure, forms a cylinder of 14 subunits composed of two heptameric rings stacked back-to-back. Interacts with the co-chaperonin GroES.

The protein localises to the cytoplasm. The enzyme catalyses ATP + H2O + a folded polypeptide = ADP + phosphate + an unfolded polypeptide.. Its function is as follows. Together with its co-chaperonin GroES, plays an essential role in assisting protein folding. The GroEL-GroES system forms a nano-cage that allows encapsulation of the non-native substrate proteins and provides a physical environment optimized to promote and accelerate protein folding. This chain is Chaperonin GroEL, found in Shewanella piezotolerans (strain WP3 / JCM 13877).